Reading from the N-terminus, the 971-residue chain is U2 snRNP component HSH155 (971 aa).

Disordered regions lie at residues 1 to 22 and 54 to 118; these read MSHP…LGGQ and TRTV…AVKE. Over residues 8–22 the composition is skewed to polar residues; it reads VNANNSDKSHQLGGQ. Residues 54-75 are compositionally biased toward basic and acidic residues; sequence TRTVQNREDSYHKRRFDMKFEP. The segment covering 78-90 has biased composition (polar residues); the sequence is DTQTVTSSENTQD. 9 HEAT repeats span residues 199 to 237, 273 to 310, 350 to 387, 513 to 550, 596 to 633, 680 to 717, 722 to 759, 792 to 829, and 832 to 870; these read MIFN…DLTK, AGLK…ALGV, NHLT…NSYP, LGCS…LLGT, PFLA…VIKN, PPIN…LAPT, KEWM…AIGP, CGPY…YIGN, and KDYI…NCSG.

It belongs to the SF3B1 family. As to quaternary structure, belongs to the CWC complex (or CEF1-associated complex), a spliceosome sub-complex reminiscent of a late-stage spliceosome composed of the U2, U5 and U6 snRNAs and at least BUD13, BUD31, BRR2, CDC40, CEF1, CLF1, CUS1, CWC2, CWC15, CWC21, CWC22, CWC23, CWC24, CWC25, CWC27, ECM2, HSH155, IST3, ISY1, LEA1, MSL1, NTC20, PRP8, PRP9, PRP11, PRP19, PRP21, PRP22, PRP45, PRP46, SLU7, SMB1, SMD1, SMD2, SMD3, SMX2, SMX3, SNT309, SNU114, SPP2, SYF1, SYF2, RSE1 and YJU2. Interacts with RDS3.

It localises to the nucleus. Its function is as follows. Contacts pre-mRNA on both sides of the branch site early in spliceosome assembly. In Saccharomyces cerevisiae (strain ATCC 204508 / S288c) (Baker's yeast), this protein is U2 snRNP component HSH155 (HSH155).